A 432-amino-acid polypeptide reads, in one-letter code: Polypyrimidine tract-binding protein homolog 3 (432 aa).

RRM domains lie at 6–80 (KVVH…FSSH), 98–187 (NRIL…YNND), 245–319 (CTVL…FSKH), and 355–429 (KMIH…FSQL).

The protein resides in the nucleus. In terms of biological role, plays a role in pre-mRNA splicing. Binds to the polypyrimidine tract of introns. May promote the binding of U2 snRNP to pre-mRNA. This is Polypyrimidine tract-binding protein homolog 3 from Arabidopsis thaliana (Mouse-ear cress).